A 336-amino-acid chain; its full sequence is Glyceraldehyde-3-phosphate dehydrogenase (336 aa).

Residues 12–13 (RI), aspartate 34, and serine 120 each bind NAD(+). D-glyceraldehyde 3-phosphate is bound by residues 150-152 (SCT), threonine 181, arginine 198, 211-212 (TG), and arginine 234. The active-site Nucleophile is cysteine 151. Asparagine 316 serves as a coordination point for NAD(+).

This sequence belongs to the glyceraldehyde-3-phosphate dehydrogenase family. As to quaternary structure, homotetramer.

It is found in the cytoplasm. The enzyme catalyses D-glyceraldehyde 3-phosphate + phosphate + NAD(+) = (2R)-3-phospho-glyceroyl phosphate + NADH + H(+). Its pathway is carbohydrate degradation; glycolysis; pyruvate from D-glyceraldehyde 3-phosphate: step 1/5. Its function is as follows. Catalyzes the oxidative phosphorylation of glyceraldehyde 3-phosphate (G3P) to 1,3-bisphosphoglycerate (BPG) using the cofactor NAD. The first reaction step involves the formation of a hemiacetal intermediate between G3P and a cysteine residue, and this hemiacetal intermediate is then oxidized to a thioester, with concomitant reduction of NAD to NADH. The reduced NADH is then exchanged with the second NAD, and the thioester is attacked by a nucleophilic inorganic phosphate to produce BPG. The polypeptide is Glyceraldehyde-3-phosphate dehydrogenase (gapA) (Staphylococcus aureus).